We begin with the raw amino-acid sequence, 189 residues long: dCTP deaminase (189 aa).

Residues 112 to 117 (KSTYAR), 136 to 138 (TLE), Gln157, Tyr171, and Gln181 each bind dCTP. Catalysis depends on Glu138, which acts as the Proton donor/acceptor.

This sequence belongs to the dCTP deaminase family. In terms of assembly, homotrimer.

The enzyme catalyses dCTP + H2O + H(+) = dUTP + NH4(+). It participates in pyrimidine metabolism; dUMP biosynthesis; dUMP from dCTP (dUTP route): step 1/2. Catalyzes the deamination of dCTP to dUTP. The protein is dCTP deaminase of Alcanivorax borkumensis (strain ATCC 700651 / DSM 11573 / NCIMB 13689 / SK2).